The sequence spans 380 residues: uncharacterized protein (380 aa).

The N-terminal stretch at 1–18 is a signal peptide; that stretch reads MALRHLALLAGLLVGVAS. Asparagine 104, asparagine 111, and asparagine 128 each carry an N-linked (GlcNAc...) asparagine glycan. The helical transmembrane segment at 148-168 threads the bilayer; it reads LFLGTFFISSGLILSVAGFFY. 2 disordered regions span residues 229–256 and 336–380; these read PQTG…QGQG and RFSG…ISNV. A compositionally biased stretch (pro residues) spans 240–249; sequence PPLPGSPGDP. Basic and acidic residues predominate over residues 356 to 366; it reads VRRERPLDRAT.

It is found in the membrane. This is an uncharacterized protein from Homo sapiens (Human).